The sequence spans 166 residues: Large ribosomal subunit protein uL10 (166 aa).

The protein belongs to the universal ribosomal protein uL10 family. In terms of assembly, part of the ribosomal stalk of the 50S ribosomal subunit. The N-terminus interacts with L11 and the large rRNA to form the base of the stalk. The C-terminus forms an elongated spine to which L12 dimers bind in a sequential fashion forming a multimeric L10(L12)X complex.

Its function is as follows. Forms part of the ribosomal stalk, playing a central role in the interaction of the ribosome with GTP-bound translation factors. This chain is Large ribosomal subunit protein uL10, found in Shouchella clausii (strain KSM-K16) (Alkalihalobacillus clausii).